Here is a 289-residue protein sequence, read N- to C-terminus: Cbb3-type cytochrome c oxidase subunit FixP (289 aa).

At 1–33 (MADKHKHVDEVSGVETTGHEWDGIRELNNPMPR) the chain is on the cytoplasmic side. The helical transmembrane segment at 34 to 56 (WWVYSFYATIIWAIGYAIAYPSW) threads the bilayer. Over 57 to 289 (PMLTEATKGM…VFVHSLGGGE (233 aa)) the chain is Periplasmic. Cytochrome c domains are found at residues 110 to 198 (FAVS…VSLT) and 205 to 286 (HLVQ…HSLG). Heme c-binding residues include Cys-123, Cys-126, His-127, Met-175, Cys-218, Cys-221, His-222, and Met-263.

It belongs to the CcoP / FixP family. As to quaternary structure, component of the cbb3-type cytochrome c oxidase at least composed of FixN, FixO, FixQ and FixP. Heme c serves as cofactor.

Its subcellular location is the cell inner membrane. Its pathway is energy metabolism; oxidative phosphorylation. Functionally, C-type cytochrome. Part of the cbb3-type cytochrome c oxidase complex. FixP subunit is required for transferring electrons from donor cytochrome c via its heme groups to FixO subunit. From there, electrons are shuttled to the catalytic binuclear center of FixN subunit where oxygen reduction takes place. The complex also functions as a proton pump. This chain is Cbb3-type cytochrome c oxidase subunit FixP, found in Rhizobium meliloti (strain 1021) (Ensifer meliloti).